The following is a 318-amino-acid chain: NADH-ubiquinone oxidoreductase chain 1 (318 aa).

8 helical membrane-spanning segments follow: residues 3–23 (LITL…LTLV), 70–90 (MFII…TPLP), 100–120 (LGIL…LWSG), 146–166 (LAII…TTLI), 171–191 (YIWL…STLA), 222–242 (LFFL…TILF), 254–273 (LYTT…FLWI), and 294–314 (LPLT…LASI).

Belongs to the complex I subunit 1 family.

Its subcellular location is the mitochondrion inner membrane. The catalysed reaction is a ubiquinone + NADH + 5 H(+)(in) = a ubiquinol + NAD(+) + 4 H(+)(out). Functionally, core subunit of the mitochondrial membrane respiratory chain NADH dehydrogenase (Complex I) that is believed to belong to the minimal assembly required for catalysis. Complex I functions in the transfer of electrons from NADH to the respiratory chain. The immediate electron acceptor for the enzyme is believed to be ubiquinone. This chain is NADH-ubiquinone oxidoreductase chain 1 (MT-ND1), found in Phyllostomus elongatus (Lesser spear-nosed bat).